Consider the following 368-residue polypeptide: UDP-N-acetylglucosamine--N-acetylmuramyl-(pentapeptide) pyrophosphoryl-undecaprenol N-acetylglucosamine transferase (368 aa).

UDP-N-acetyl-alpha-D-glucosamine-binding positions include 13-15 (TGG), Asn-127, Arg-168, Ser-200, Ile-254, and Gln-299.

Belongs to the glycosyltransferase 28 family. MurG subfamily.

The protein resides in the cell inner membrane. The enzyme catalyses di-trans,octa-cis-undecaprenyl diphospho-N-acetyl-alpha-D-muramoyl-L-alanyl-D-glutamyl-meso-2,6-diaminopimeloyl-D-alanyl-D-alanine + UDP-N-acetyl-alpha-D-glucosamine = di-trans,octa-cis-undecaprenyl diphospho-[N-acetyl-alpha-D-glucosaminyl-(1-&gt;4)]-N-acetyl-alpha-D-muramoyl-L-alanyl-D-glutamyl-meso-2,6-diaminopimeloyl-D-alanyl-D-alanine + UDP + H(+). Its pathway is cell wall biogenesis; peptidoglycan biosynthesis. Cell wall formation. Catalyzes the transfer of a GlcNAc subunit on undecaprenyl-pyrophosphoryl-MurNAc-pentapeptide (lipid intermediate I) to form undecaprenyl-pyrophosphoryl-MurNAc-(pentapeptide)GlcNAc (lipid intermediate II). This chain is UDP-N-acetylglucosamine--N-acetylmuramyl-(pentapeptide) pyrophosphoryl-undecaprenol N-acetylglucosamine transferase, found in Parabacteroides distasonis (strain ATCC 8503 / DSM 20701 / CIP 104284 / JCM 5825 / NCTC 11152).